An 830-amino-acid polypeptide reads, in one-letter code: FYN-binding protein 1 (830 aa).

Residues 1–501 (MDGKTDVKSL…REKKEQELRK (501 aa)) form a disordered region. The residue at position 13 (K13) is an N6-acetyllysine. Positions 15–55 (NTGSNPTEEVSTSSRPFKVAGQNSPSGIQSKKNLFDNQGNA) are enriched in polar residues. 2 positions are modified to phosphoserine: S38 and S56. Positions 79–89 (TYEEKSEKEPK) are enriched in basic and acidic residues. S233 carries the post-translational modification Phosphoserine. 2 stretches are compositionally biased toward basic and acidic residues: residues 248–259 (PAKEDPEDKDHG) and 284–296 (NSEE…KTDI). At S329 the chain carries Phosphoserine. Residues 330–339 (QEKEGDKDSA) show a composition bias toward basic and acidic residues. 2 stretches are compositionally biased toward pro residues: residues 344–362 (KPLP…PSRP) and 391–407 (LPPP…PLPA). Residues 347-447 (PPLSVLGPPP…QDGVMHSDGT (101 aa)) form an interaction with SKAP1 region. The span at 450–464 (LEEEQESDGEMYEDI) shows a compositional bias: acidic residues. Phosphoserine is present on S456. The short motif at 461 to 464 (YEDI) is the SH2-binding element. Over residues 465-500 (ESSKERDKKREKEEKKRLELERKEQKEREKKEQELR) the composition is skewed to basic and acidic residues. The stretch at 465-502 (ESSKERDKKREKEEKKRLELERKEQKEREKKEQELRKK) forms a coiled coil. Residues 479 to 486 (KKRLELER) carry the Nuclear localization signal motif. The region spanning 510-571 (QVIHHAKACC…KTTAVKIDYD (62 aa)) is the SH3 1 domain. Y570 carries the post-translational modification Phosphotyrosine. The residue at position 572 (S572) is a Phosphoserine. An SH2-binding; to LCP2 motif is present at residues 595 to 598 (YDDV). Disordered stretches follow at residues 601–646 (QDAP…DEKT) and 660–739 (KDER…EKEE). Positions 621–636 (ADDDIYDGIEEEDADD) are enriched in acidic residues. Residues 626–629 (YDGI) carry the SH2-binding; to FYN motif. Residues 660 to 675 (KDERKKSIREKPKVSE) show a composition bias toward basic and acidic residues. The segment covering 693–703 (VGEEVYDDVDA) has biased composition (acidic residues). A Phosphotyrosine modification is found at Y698. Basic and acidic residues predominate over residues 722–739 (TKAEEKDPKKLKKQEKEE). The short motif at 732-739 (LKKQEKEE) is the Nuclear localization signal element. The region spanning 747–815 (KYDGEIRVLY…LRSYLVDNDG (69 aa)) is the SH3 2 domain.

In terms of assembly, part of a complex consisting of SKAP2, FYB1 and PTPNS1. Part of a complex consisting of SKAP2, FYB1 and LILRB3. Part of a complex consisting of SKAP1, FYB1 and CLNK. Interacts with CLNK (via its SH2 domain) and FYN; this interaction allows SKAP1 and FYB1 to recruit FYN to the complex, thus promoting the phosphorylation of CLNK by FYN. Interacts with FYN. Interacts with LCP2. Interacts with SKAP1. Interacts with SKAP2. Interacts with FASLG. Interacts with EVL. Interacts with TMEM47. Interacts with LCK. In terms of processing, T-cell receptor ligation leads to increased tyrosine phosphorylation.

The protein localises to the cytoplasm. Its subcellular location is the nucleus. It is found in the cell junction. In terms of biological role, acts as an adapter protein of the FYN and LCP2 signaling cascades in T-cells. May play a role in linking T-cell signaling to remodeling of the actin cytoskeleton. Modulates the expression of IL2. Involved in platelet activation. Prevents the degradation of SKAP1 and SKAP2. May be involved in high affinity immunoglobulin epsilon receptor signaling in mast cells. This chain is FYN-binding protein 1, found in Rattus norvegicus (Rat).